The chain runs to 321 residues: Phosphopantothenate--cysteine ligase 1 (321 aa).

It belongs to the PPC synthetase family. In terms of assembly, homodimer.

The catalysed reaction is (R)-4'-phosphopantothenate + L-cysteine + CTP = N-[(R)-4-phosphopantothenoyl]-L-cysteine + CMP + diphosphate + H(+). The protein operates within cofactor biosynthesis; coenzyme A biosynthesis; CoA from (R)-pantothenate: step 2/5. In terms of biological role, catalyzes the first step in the biosynthesis of coenzyme A from vitamin B5, where cysteine is conjugated to 4'-phosphopantothenate to form 4-phosphopantothenoylcysteine. The chain is Phosphopantothenate--cysteine ligase 1 from Oryza sativa subsp. japonica (Rice).